The following is a 219-amino-acid chain: 7-cyano-7-deazaguanine synthase (219 aa).

10–20 serves as a coordination point for ATP; that stretch reads FSGGQDSTTCL. Residues Cys188, Cys197, Cys200, and Cys203 each contribute to the Zn(2+) site.

The protein belongs to the QueC family. In terms of assembly, homodimer. It depends on Zn(2+) as a cofactor.

It carries out the reaction 7-carboxy-7-deazaguanine + NH4(+) + ATP = 7-cyano-7-deazaguanine + ADP + phosphate + H2O + H(+). It functions in the pathway purine metabolism; 7-cyano-7-deazaguanine biosynthesis. In terms of biological role, catalyzes the ATP-dependent conversion of 7-carboxy-7-deazaguanine (CDG) to 7-cyano-7-deazaguanine (preQ(0)). The sequence is that of 7-cyano-7-deazaguanine synthase from Clostridium botulinum (strain Kyoto / Type A2).